The following is a 533-amino-acid chain: Zinc finger protein 26 (533 aa).

Positions 14–85 (LSFKDISMEF…NAKISRQSCP (72 aa)) constitute a KRAB domain. 13 consecutive C2H2-type zinc fingers follow at residues 174–196 (CVCS…LRIH), 202–224 (YECS…QRVH), 230–252 (YSCS…QEIH), 258–280 (YGCS…QRSH), 286–308 (YECS…QRTH), 314–336 (HKCS…IRMH), 342–364 (YQCS…QGVH), 370–392 (YQCG…LRAH), 398–420 (YGCS…RRTH), 426–448 (YECS…QRTH), 454–476 (YECN…QKTH), 482–504 (FKCS…QRVH), and 510–532 (WKCS…RKTH).

Belongs to the krueppel C2H2-type zinc-finger protein family.

It is found in the nucleus. Its function is as follows. May be involved in transcriptional regulation. This is Zinc finger protein 26 (ZNF26) from Homo sapiens (Human).